A 468-amino-acid chain; its full sequence is ATP synthase subunit beta (468 aa).

Position 155 to 162 (155 to 162) interacts with ATP; the sequence is GGAGVGKT.

The protein belongs to the ATPase alpha/beta chains family. F-type ATPases have 2 components, CF(1) - the catalytic core - and CF(0) - the membrane proton channel. CF(1) has five subunits: alpha(3), beta(3), gamma(1), delta(1), epsilon(1). CF(0) has three main subunits: a(1), b(2) and c(9-12). The alpha and beta chains form an alternating ring which encloses part of the gamma chain. CF(1) is attached to CF(0) by a central stalk formed by the gamma and epsilon chains, while a peripheral stalk is formed by the delta and b chains.

Its subcellular location is the cell membrane. It carries out the reaction ATP + H2O + 4 H(+)(in) = ADP + phosphate + 5 H(+)(out). Functionally, produces ATP from ADP in the presence of a proton gradient across the membrane. The catalytic sites are hosted primarily by the beta subunits. The protein is ATP synthase subunit beta of Enterococcus hirae (strain ATCC 9790 / DSM 20160 / JCM 8729 / LMG 6399 / NBRC 3181 / NCIMB 6459 / NCDO 1258 / NCTC 12367 / WDCM 00089 / R).